Consider the following 540-residue polypeptide: Ribonuclease Y (540 aa).

The helical transmembrane segment at 4–24 (TILVPVAVAIVSVLVGGCAGY) threads the bilayer. One can recognise a KH domain in the interval 230-293 (TVSVVNLPSD…EIAKRALERL (64 aa)). Positions 356 to 449 (VLSHSIEVGK…VVAADTISSA (94 aa)) constitute an HD domain.

This sequence belongs to the RNase Y family.

The protein localises to the cell membrane. Functionally, endoribonuclease that initiates mRNA decay. The chain is Ribonuclease Y from Lactobacillus johnsonii (strain CNCM I-12250 / La1 / NCC 533).